A 413-amino-acid polypeptide reads, in one-letter code: Tyrosine--tRNA ligase (413 aa).

Y34 is an L-tyrosine binding site. The short motif at 39-48 (CTAQSLHVGN) is the 'HIGH' region element. L-tyrosine is bound by residues Y171 and Q175. Residues 231–235 (KMGKT) carry the 'KMSKS' region motif. Position 234 (K234) interacts with ATP. An S4 RNA-binding domain is found at 346 to 411 (IPITELLVTI…GKKCHILVKI (66 aa)).

The protein belongs to the class-I aminoacyl-tRNA synthetase family. TyrS type 1 subfamily. Homodimer.

Its subcellular location is the cytoplasm. It catalyses the reaction tRNA(Tyr) + L-tyrosine + ATP = L-tyrosyl-tRNA(Tyr) + AMP + diphosphate + H(+). Its function is as follows. Catalyzes the attachment of tyrosine to tRNA(Tyr) in a two-step reaction: tyrosine is first activated by ATP to form Tyr-AMP and then transferred to the acceptor end of tRNA(Tyr). This is Tyrosine--tRNA ligase from Orientia tsutsugamushi (strain Boryong) (Rickettsia tsutsugamushi).